The primary structure comprises 169 residues: S-ribosylhomocysteine lyase (169 aa).

Fe cation contacts are provided by His-54, His-58, and Cys-128.

The protein belongs to the LuxS family. As to quaternary structure, homodimer. It depends on Fe cation as a cofactor.

The enzyme catalyses S-(5-deoxy-D-ribos-5-yl)-L-homocysteine = (S)-4,5-dihydroxypentane-2,3-dione + L-homocysteine. Its function is as follows. Involved in the synthesis of autoinducer 2 (AI-2) which is secreted by bacteria and is used to communicate both the cell density and the metabolic potential of the environment. The regulation of gene expression in response to changes in cell density is called quorum sensing. Catalyzes the transformation of S-ribosylhomocysteine (RHC) to homocysteine (HC) and 4,5-dihydroxy-2,3-pentadione (DPD). This Shewanella halifaxensis (strain HAW-EB4) protein is S-ribosylhomocysteine lyase.